Here is a 424-residue protein sequence, read N- to C-terminus: MTQTALLQDLEARGLIAQTTDMAALQELLNKESVTLYCGFDPTADSLHIGSLVPILMLKRFQQAGHRPVALVGGATGMIGDPSFKAAERKLNTPDVIEGWVEKIRKQVEPFLSFEGENAAVMANNYDWFGKMNALEFLRDIGKHFSVNAMIKKESVQQRINRDDQGISYTEFSYSLLQGYDFAELNQRLGCKLQIGGSDQWGNITAGTDLTRRLNQTQVYGLTMPLVTKADGTKFGKTESGTIWLDAKKTSPYAFYQFWLGTADADVYKFLRYFSFLSVDEIASIEEADKSREGKPEGQRILAEQVTELVHGKAALEAAQRITHSLFSNDLTNLTADDFAQLAQDGLPTIKLDKSASGLIDALAAGGLAKSKSEARTFIQSGAVSVNGIKVDSLEHAIGDGERLFGQYSLLKRGKKLYALVDWQ.

Position 37 (Tyr-37) interacts with L-tyrosine. Residues 42-51 (PTADSLHIGS) carry the 'HIGH' region motif. Residues Tyr-174 and Gln-178 each contribute to the L-tyrosine site. The short motif at 234 to 238 (KFGKT) is the 'KMSKS' region element. An ATP-binding site is contributed by Lys-237. Residues 357 to 422 (SGLIDALAAG…RGKKLYALVD (66 aa)) enclose the S4 RNA-binding domain.

The protein belongs to the class-I aminoacyl-tRNA synthetase family. TyrS type 1 subfamily. In terms of assembly, homodimer.

It is found in the cytoplasm. It carries out the reaction tRNA(Tyr) + L-tyrosine + ATP = L-tyrosyl-tRNA(Tyr) + AMP + diphosphate + H(+). Catalyzes the attachment of tyrosine to tRNA(Tyr) in a two-step reaction: tyrosine is first activated by ATP to form Tyr-AMP and then transferred to the acceptor end of tRNA(Tyr). The sequence is that of Tyrosine--tRNA ligase from Chromobacterium violaceum (strain ATCC 12472 / DSM 30191 / JCM 1249 / CCUG 213 / NBRC 12614 / NCIMB 9131 / NCTC 9757 / MK).